The following is a 781-amino-acid chain: Dynamin-related protein dnm1 (781 aa).

In terms of domain architecture, Dynamin-type G spans 23-328 (FLDLPSIVVV…LVSHIRERLP (306 aa)). The G1 motif stretch occupies residues 33–40 (GSQSCGKS). 33 to 40 (GSQSCGKS) lines the GTP pocket. Residues 59–61 (VTR) form a G2 motif region. A disordered region spans residues 76-103 (KNNHDEESTSDNNSEETSAAGETGSLEG). Residues 170 to 173 (DLPG) form a G3 motif region. Residues 170 to 174 (DLPGL) and 239 to 242 (TKLD) contribute to the GTP site. A G4 motif region spans residues 239–242 (TKLD). Residues 269 to 272 (VNRS) are G5 motif. The GED domain maps to 694-781 (VDLIKELITS…QANKIISTVF (88 aa)).

The protein belongs to the TRAFAC class dynamin-like GTPase superfamily. Dynamin/Fzo/YdjA family.

It localises to the cytoplasm. The protein resides in the mitochondrion outer membrane. It catalyses the reaction GTP + H2O = GDP + phosphate + H(+). Its function is as follows. Microtubule-associated force-producing protein that mediates mitochondrial fission during interphasic growth and at cell division. Fission of mitochondria occurs in many cell types and constitutes an important step in mitochondria morphology, which is balanced between fusion and fission. With vps1, acts redundantly in peroxisome biogenesis, which is under cell cycle control. The chain is Dynamin-related protein dnm1 (dnm1) from Schizosaccharomyces pombe (strain 972 / ATCC 24843) (Fission yeast).